The primary structure comprises 189 residues: GTP cyclohydrolase 1 (189 aa).

3 residues coordinate Zn(2+): C78, H81, and C150.

The protein belongs to the GTP cyclohydrolase I family. As to quaternary structure, homomer.

It catalyses the reaction GTP + H2O = 7,8-dihydroneopterin 3'-triphosphate + formate + H(+). It functions in the pathway cofactor biosynthesis; 7,8-dihydroneopterin triphosphate biosynthesis; 7,8-dihydroneopterin triphosphate from GTP: step 1/1. The chain is GTP cyclohydrolase 1 from Bacillus mycoides (strain KBAB4) (Bacillus weihenstephanensis).